Reading from the N-terminus, the 112-residue chain is Urocortin-2 (112 aa).

The first 22 residues, 1-22 (MTRCALLLLMVLMLGRVLVVPV), serve as a signal peptide directing secretion. The propeptide occupies 23-70 (TPIPTFQLRPQNSPQTTPRPAASESPSAAPTWPWAAQSHCSPTRHPGS). A disordered region spans residues 27–66 (TFQLRPQNSPQTTPRPAASESPSAAPTWPWAAQSHCSPTR). A compositionally biased stretch (low complexity) spans 38–58 (TTPRPAASESPSAAPTWPWAA).

It belongs to the sauvagine/corticotropin-releasing factor/urotensin I family. As to quaternary structure, binds with high affinity to CRF receptors 2-alpha and 2-beta. Post-translationally, glycosylated.

It localises to the secreted. Its function is as follows. Suppresses food intake, delays gastric emptying and decreases heat-induced edema. Might represent an endogenous ligand for maintaining homeostasis after stress. The sequence is that of Urocortin-2 (UCN2) from Homo sapiens (Human).